A 428-amino-acid polypeptide reads, in one-letter code: Trigger factor (428 aa).

The PPIase FKBP-type domain occupies 163 to 248; it reads GDTAVIDFEG…VHEIKEKRLP (86 aa).

It belongs to the FKBP-type PPIase family. Tig subfamily.

It localises to the cytoplasm. It carries out the reaction [protein]-peptidylproline (omega=180) = [protein]-peptidylproline (omega=0). Its function is as follows. Involved in protein export. Acts as a chaperone by maintaining the newly synthesized protein in an open conformation. Functions as a peptidyl-prolyl cis-trans isomerase. This chain is Trigger factor, found in Geobacillus sp. (strain WCH70).